Reading from the N-terminus, the 533-residue chain is D-3-phosphoglycerate dehydrogenase (533 aa).

Ala2 is subject to N-acetylalanine. Ser14 bears the Phosphoserine mark. Residue Lys21 is modified to N6-acetyllysine; alternate. Lys21 participates in a covalent cross-link: Glycyl lysine isopeptide (Lys-Gly) (interchain with G-Cter in SUMO1); alternate. Lys21 is covalently cross-linked (Glycyl lysine isopeptide (Lys-Gly) (interchain with G-Cter in SUMO2); alternate). Lys58 carries the post-translational modification N6-acetyllysine. NAD(+)-binding positions include Thr78, 155–156, Asp175, Thr207, 234–236, and Asp260; these read RI and CAR. Thr78 bears the Phosphothreonine mark. Arg236 is a catalytic residue. Glu265 is an active-site residue. His283 acts as the Proton donor in catalysis. 283 to 286 serves as a coordination point for NAD(+); the sequence is HLGA.

It belongs to the D-isomer specific 2-hydroxyacid dehydrogenase family. Homotetramer. In terms of tissue distribution, liver, kidney, brain, testis.

The enzyme catalyses (2R)-3-phosphoglycerate + NAD(+) = 3-phosphooxypyruvate + NADH + H(+). It functions in the pathway amino-acid biosynthesis; L-serine biosynthesis; L-serine from 3-phospho-D-glycerate: step 1/3. In terms of biological role, catalyzes the reversible oxidation of 3-phospho-D-glycerate to 3-phosphonooxypyruvate, the first step of the phosphorylated L-serine biosynthesis pathway. Does not catalyze the reversible oxidation of 2-hydroxyglutarate to 2-oxoglutarate and the reversible oxidation of (S)-malate to oxaloacetate. This Rattus norvegicus (Rat) protein is D-3-phosphoglycerate dehydrogenase (Phgdh).